Reading from the N-terminus, the 153-residue chain is SsrA-binding protein (153 aa).

It belongs to the SmpB family.

It is found in the cytoplasm. In terms of biological role, required for rescue of stalled ribosomes mediated by trans-translation. Binds to transfer-messenger RNA (tmRNA), required for stable association of tmRNA with ribosomes. tmRNA and SmpB together mimic tRNA shape, replacing the anticodon stem-loop with SmpB. tmRNA is encoded by the ssrA gene; the 2 termini fold to resemble tRNA(Ala) and it encodes a 'tag peptide', a short internal open reading frame. During trans-translation Ala-aminoacylated tmRNA acts like a tRNA, entering the A-site of stalled ribosomes, displacing the stalled mRNA. The ribosome then switches to translate the ORF on the tmRNA; the nascent peptide is terminated with the 'tag peptide' encoded by the tmRNA and targeted for degradation. The ribosome is freed to recommence translation, which seems to be the essential function of trans-translation. This Pelotomaculum thermopropionicum (strain DSM 13744 / JCM 10971 / SI) protein is SsrA-binding protein.